Consider the following 685-residue polypeptide: Putative pentatricopeptide repeat-containing protein At3g08820 (685 aa).

PPR repeat units follow at residues 75–109, 110–144, 145–175, 176–210, 211–245, 246–276, 277–311, 312–346, 347–381, 383–412, 413–443, and 449–479; these read NIFLYNSLINGFVNNHLFHETLDLFLSIRKHGLYL, HGFTFPLVLKACTRASSRKLGIDLHSLVVKCGFNH, DVAAMTSLLSIYSGSGRLNDAHKLFDEIPDR, SVVTWTALFSGYTTSGRHREAIDLFKKMVEMGVKP, DSYFIVQVLSACVHVGDLDSGEWIVKYMEEMEMQK, NSFVRTTLVNLYAKCGKMEKARSVFDSMVEK, DIVTWSTMIQGYASNSFPKEGIELFLQMLQENLKP, DQFSIVGFLSSCASLGALDLGEWGISLIDRHEFLT, NLFMANALIDMYAKCGAMARGFEVFKEMKEKDIVI, NAAISGLAKNGHVKLSFAVFGQTEKLGISP, DGSTFLGLLCGCVHAGLIQDGLRFFNAISCV, and TVEHYGCMVDLWGRAGMLDDAYRLICDMPMR. The interval 484–559 is type E motif; it reads VWGALLSGCR…IPGYSWIELE (76 aa). Residues 560 to 590 are type E(+) motif; sequence GKVHEFLADDKSHPLSDKIYAKLEDLGNEMR. The type DYW motif stretch occupies residues 591–685; it reads LMGFVPTTEF…NGSCSCNDYW (95 aa).

It belongs to the PPR family. PCMP-H subfamily.

This chain is Putative pentatricopeptide repeat-containing protein At3g08820 (PCMP-H84), found in Arabidopsis thaliana (Mouse-ear cress).